The sequence spans 162 residues: Phospholipase A and acyltransferase 2 (162 aa).

Residues 1–133 (MALARPRPRL…VSRSDQVTGA (133 aa)) lie on the Cytoplasmic side of the membrane. Residues 13–129 (LIEISRFGYA…LRYGVSRSDQ (117 aa)) enclose the LRAT domain. Active-site residues include His-23 and His-35. Catalysis depends on Cys-113, which acts as the Acyl-thioester intermediate. A helical transmembrane segment spans residues 134-154 (VTTVGVAAGLLAAASLVGILL). Over 155 to 162 (ARSKRERQ) the chain is Lumenal.

Belongs to the H-rev107 family. As to expression, expressed in liver, kidney, small intestine testis and colon. Undetectable in testis, placenta, salivary gland and fetal brain.

The protein localises to the cytoplasm. The protein resides in the membrane. The enzyme catalyses a 1,2-diacyl-sn-glycero-3-phosphocholine + H2O = a 1-acyl-sn-glycero-3-phosphocholine + a fatty acid + H(+). The catalysed reaction is a 1,2-diacyl-sn-glycero-3-phosphocholine + H2O = a 2-acyl-sn-glycero-3-phosphocholine + a fatty acid + H(+). It carries out the reaction a 1,2-diacyl-sn-glycero-3-phosphoethanolamine + a 1,2-diacyl-sn-glycero-3-phosphocholine = an N-acyl-1,2-diacyl-sn-glycero-3-phosphoethanolamine + a 1-acyl-sn-glycero-3-phosphocholine + H(+). It catalyses the reaction a 1,2-diacyl-sn-glycero-3-phosphoethanolamine + a 1,2-diacyl-sn-glycero-3-phosphocholine = an N-acyl-1,2-diacyl-sn-glycero-3-phosphoethanolamine + a 2-acyl-sn-glycero-3-phosphocholine + H(+). The enzyme catalyses 1,2-dihexadecanoyl-sn-glycero-3-phosphocholine + H2O = 1-hexadecanoyl-sn-glycero-3-phosphocholine + hexadecanoate + H(+). The catalysed reaction is 1,2-dihexadecanoyl-sn-glycero-3-phosphocholine + H2O = 2-hexadecanoyl-sn-glycero-3-phosphocholine + hexadecanoate + H(+). It carries out the reaction 1-hexadecanoyl-2-(9Z-octadecenoyl)-sn-glycero-3-phosphocholine + H2O = 2-(9Z-octadecenoyl)-sn-glycero-3-phosphocholine + hexadecanoate + H(+). It catalyses the reaction 1-hexadecanoyl-2-(9Z-octadecenoyl)-sn-glycero-3-phosphocholine + H2O = 1-hexadecanoyl-sn-glycero-3-phosphocholine + (9Z)-octadecenoate + H(+). The enzyme catalyses 1-hexadecanoyl-2-(5Z,8Z,11Z,14Z-eicosatetraenoyl)-sn-glycero-3-phosphocholine + H2O = 2-(5Z,8Z,11Z,14Z)-eicosatetraenoyl-sn-glycero-3-phosphocholine + hexadecanoate + H(+). The catalysed reaction is 1-hexadecanoyl-2-(9Z,12Z-octadecadienoyl)-sn-glycero-3-phosphoethanolamine + H2O = 1-hexadecanoyl-sn-glycero-3-phosphoethanolamine + (9Z,12Z)-octadecadienoate + H(+). It carries out the reaction 1-hexadecanoyl-2-(9Z,12Z-octadecadienoyl)-sn-glycero-3-phosphoethanolamine + H2O = 2-(9Z,12Z)-octadecadienoyl-sn-glycero-3-phosphoethanolamine + hexadecanoate + H(+). It catalyses the reaction 1-hexadecanoyl-2-(5Z,8Z,11Z,14Z-eicosatetraenoyl)-sn-glycero-3-phosphoethanolamine + H2O = 1-hexadecanoyl-sn-glycero-3-phosphoethanolamine + (5Z,8Z,11Z,14Z)-eicosatetraenoate + H(+). The enzyme catalyses 1-hexadecanoyl-2-(5Z,8Z,11Z,14Z-eicosatetraenoyl)-sn-glycero-3-phosphoethanolamine + H2O = 2-(5Z,8Z,11Z,14Z)-eicosatetraenoyl-sn-glycero-3-phosphoethanolamine + hexadecanoate + H(+). The catalysed reaction is 1,2-di-(9Z-octadecenoyl)-sn-glycero-3-phosphoethanolamine + 1,2-dihexadecanoyl-sn-glycero-3-phosphocholine = N-hexadecanoyl-1,2-di-(9Z-octadecenoyl)-sn-glycero-3-phosphoethanolamine + 2-hexadecanoyl-sn-glycero-3-phosphocholine + H(+). It carries out the reaction 1,2-di-(9Z-octadecenoyl)-sn-glycero-3-phosphoethanolamine + 1,2-dihexadecanoyl-sn-glycero-3-phosphocholine = N-hexadecanoyl-1,2-di-(9Z-octadecenoyl)-sn-glycero-3-phosphoethanolamine + 1-hexadecanoyl-sn-glycero-3-phosphocholine + H(+). It catalyses the reaction 1-hexanoyl-2-acyl-sn-glycero-3-phosphocholine + H2O = 1-hexanoyl-sn-glycero-3-phosphocholine + a fatty acid + H(+). The enzyme catalyses 1,2-diheptadecanoyl-sn-glycero-3-phosphoethanolamine + 1-(9Z-octadecenoyl)-2-hexadecanoyl-sn-glycero-3-phosphocholine = 1,2-diheptadecanoyl-sn-glycero-3-phospho-N-hexadecanoyl-ethanolamine + 1-(9Z-octadecenoyl)-sn-glycero-3-phosphocholine + H(+). The catalysed reaction is 1,2-diheptadecanoyl-sn-glycero-3-phosphoethanolamine + 1-(9Z-octadecenoyl)-2-hexadecanoyl-sn-glycero-3-phosphocholine = 1,2-diheptadecanoyl-sn-glycero-3-phospho-N-(9Z-octadecenoyl)-ethanolamine + 2-hexadecanoyl-sn-glycero-3-phosphocholine + H(+). It carries out the reaction 1,2-dihexanoyl-sn-glycero-3-phosphocholine + 1,2-diheptanoyl-sn-glycero-3-phosphocholine = 1-heptanoyl-2-hexanoyl-sn-glycero-3-phosphocholine + 1-hexanoyl-2-heptanoyl-sn-glycero-3-phosphocholine. It catalyses the reaction 1,2-diheptanoyl-sn-glycero-3-phosphocholine + 1,2-dihexadecanoyl-sn-glycero-3-phosphocholine = 1-hexadecanoyl-2-heptanoyl-sn-glycero-3-phosphocholine + 1-heptanoyl-2-hexadecanoyl-sn-glycero-3-phosphocholine. The enzyme catalyses 1,2-dihexanoyl-sn-glycero-3-phosphoethanolamine + 1,2-diheptanoyl-sn-glycero-3-phosphocholine = 1-heptanoyl-2-hexanoyl-sn-glycero-3-phosphoethanolamine + 1-hexanoyl-2-heptanoyl-sn-glycero-3-phosphocholine. The catalysed reaction is 1-hexanoyl-2-acyl-sn-glycero-3-phosphocholine + H2O = hexanoate + a 2-acyl-sn-glycero-3-phosphocholine + H(+). It carries out the reaction 1,2-dihexanoyl-sn-glycero-3-phosphoethanolamine + 2-heptanoyl-sn-glycero-3-phosphocholine = hexanoyl-sn-glycero-3-phosphoethanolamine + 1-hexanoyl-2-heptanoyl-sn-glycero-3-phosphocholine. Exhibits both phospholipase A1/2 and acyltransferase activities. Shows phospholipase A1 (PLA1) and A2 (PLA2) activity, catalyzing the calcium-independent release of fatty acids from the sn-1 or sn-2 position of glycerophospholipids. For most substrates, PLA1 activity is much higher than PLA2 activity. Shows O-acyltransferase activity, catalyzing the transfer of a fatty acyl group from glycerophospholipid to the hydroxyl group of lysophospholipid. Shows N-acyltransferase activity, catalyzing the calcium-independent transfer of a fatty acyl group at the sn-1 position of phosphatidylcholine (PC) and other glycerophospholipids to the primary amine of phosphatidylethanolamine (PE), forming N-acylphosphatidylethanolamine (NAPE), which serves as precursor for N-acylethanolamines (NAEs). Catalyzes N-acylation of PE using both sn-1 and sn-2 palmitoyl groups of PC as acyl donor. Exhibits high phospholipase A1/2 activity and low N-acyltransferase activity. The polypeptide is Phospholipase A and acyltransferase 2 (Homo sapiens (Human)).